The sequence spans 163 residues: Phosphopantetheine adenylyltransferase (163 aa).

Thr-11 serves as a coordination point for substrate. ATP is bound by residues Thr-11 to Phe-12 and His-19. Substrate contacts are provided by Lys-43, Leu-75, and Arg-89. ATP-binding positions include Gly-90–Arg-92, Glu-100, and Tyr-125–Thr-131.

The protein belongs to the bacterial CoaD family. Homohexamer. Mg(2+) is required as a cofactor.

It localises to the cytoplasm. It catalyses the reaction (R)-4'-phosphopantetheine + ATP + H(+) = 3'-dephospho-CoA + diphosphate. It functions in the pathway cofactor biosynthesis; coenzyme A biosynthesis; CoA from (R)-pantothenate: step 4/5. Its function is as follows. Reversibly transfers an adenylyl group from ATP to 4'-phosphopantetheine, yielding dephospho-CoA (dPCoA) and pyrophosphate. This chain is Phosphopantetheine adenylyltransferase, found in Acinetobacter baumannii (strain SDF).